The following is a 191-amino-acid chain: Protein GrpE (191 aa).

It belongs to the GrpE family. In terms of assembly, homodimer.

Its subcellular location is the cytoplasm. Its function is as follows. Participates actively in the response to hyperosmotic and heat shock by preventing the aggregation of stress-denatured proteins, in association with DnaK and GrpE. It is the nucleotide exchange factor for DnaK and may function as a thermosensor. Unfolded proteins bind initially to DnaJ; upon interaction with the DnaJ-bound protein, DnaK hydrolyzes its bound ATP, resulting in the formation of a stable complex. GrpE releases ADP from DnaK; ATP binding to DnaK triggers the release of the substrate protein, thus completing the reaction cycle. Several rounds of ATP-dependent interactions between DnaJ, DnaK and GrpE are required for fully efficient folding. This is Protein GrpE from Listeria monocytogenes serotype 4a (strain HCC23).